Consider the following 70-residue polypeptide: Small ribosomal subunit protein bS21 (70 aa).

Belongs to the bacterial ribosomal protein bS21 family.

The protein is Small ribosomal subunit protein bS21 (rpsU) of Helicobacter pylori (strain J99 / ATCC 700824) (Campylobacter pylori J99).